Consider the following 229-residue polypeptide: DNA mismatch repair protein MutH (229 aa).

This sequence belongs to the MutH family.

It localises to the cytoplasm. Functionally, sequence-specific endonuclease that cleaves unmethylated GATC sequences. It is involved in DNA mismatch repair. The chain is DNA mismatch repair protein MutH from Escherichia coli O6:K15:H31 (strain 536 / UPEC).